The sequence spans 427 residues: Polyprenol-phosphate-mannose-dependent alpha-(1-2)-phosphatidylinositol mannoside mannosyltransferase (427 aa).

Transmembrane regions (helical) follow at residues 18 to 38 (LWCLLWLLAGVALGYVAWRLF), 101 to 121 (ASVAITVLTLVLLIASTAIVL), 143 to 163 (WLAVLIVAPATIWLEPISSNF), 191 to 211 (LMLGLGIALKLTPAVFLLYFL), 218 to 238 (AALTALASFAVATLLGFVLAW), 279 to 299 (ERFALWVAGSLLVLAATIWAM), 308 to 328 (PTLAVICVALFGLVVSPVSWS), 331 to 346 (WVWMLPAVLVIGLLGW), 351 to 371 (VALAMLSLAGVVLMRWTPIDL), and 386 to 406 (LAGMSYVWWALAVIVVAGLTV).

It belongs to the glycosyltransferase 87 family.

The protein localises to the cell membrane. Its pathway is phospholipid metabolism; phosphatidylinositol metabolism. Its function is as follows. Responsible for the addition of alpha-(1-2) mannose branches to the linear mannan core on the biosynthetic pathway to mature lipoarabinomannan (LAM). This chain is Polyprenol-phosphate-mannose-dependent alpha-(1-2)-phosphatidylinositol mannoside mannosyltransferase, found in Mycobacterium tuberculosis (strain ATCC 25618 / H37Rv).